The sequence spans 364 residues: Envelope glycoprotein US27 (364 aa).

Residues 1–36 are Virion surface-facing; sequence MTTSTTTTTNIMLQVSNVTNHTLNSTEIYQLFEYTR. N-linked (GlcNAc...) asparagine; by host glycosylation is found at asparagine 17, asparagine 20, and asparagine 24. A helical membrane pass occupies residues 37–57; the sequence is FGVWLMCIVGTFLNMLVITTI. The Intravirion portion of the chain corresponds to 58–69; sequence LYYRRKKKSPSD. A helical membrane pass occupies residues 70–90; the sequence is TYICNLAVADLLIVVGLPFFL. The Virion surface segment spans residues 91–103; it reads EYAKHHPKLSREV. A helical membrane pass occupies residues 104-124; sequence VCSGLNACFYICLFAGVCFLI. At 125–150 the chain is on the intravirion side; the sequence is NLSMDRYCVIVWGVELNRVRNNKRAT. Residues 151–171 traverse the membrane as a helical segment; the sequence is CWVVIFWILAALMGMPHYLMY. Residues 172-188 lie on the Virion surface side of the membrane; sequence SHTNNECVGEFANETSG. A helical transmembrane segment spans residues 189–209; that stretch reads WFPVFLNTKVNICGYLAPIVL. The Intravirion portion of the chain corresponds to 210–234; the sequence is MAYTYNRMVRFIINYVGKWHMQTLH. A helical transmembrane segment spans residues 235–255; the sequence is VLLVVVVSFASFWFPFNLALF. The Virion surface segment spans residues 256 to 279; sequence LESIRLLSGTQNETLQTVITFCLY. A helical transmembrane segment spans residues 280-300; sequence VGQFLAYVRACLNPGIYILVG. Residues 301 to 364 lie on the Intravirion side of the membrane; it reads TQMRKDMWTT…MESGEEEFLL (64 aa). The disordered stretch occupies residues 344–364; sequence KRTHYDRKHAPMESGEEEFLL.

This sequence belongs to the G-protein coupled receptor 1 family. In terms of assembly, heterodimerizes with US28.

Its subcellular location is the virion. The protein resides in the host cell membrane. Plays an important role in spread of HCMV via the extracellular route. As a G-protein-coupled receptor (vGPCR), may activate signaling pathways important for virion assembly or egress processes. The sequence is that of Envelope glycoprotein US27 (US27) from Homo sapiens (Human).